An 877-amino-acid chain; its full sequence is Polycomb protein Scm (877 aa).

Residues 1–57 (MSGGRDSSTSSGSNSAAPGASTNATSSASASASSTSTSASPGSTTSPASTQRQRGRP) form a disordered region. The span at 7-50 (SSTSSGSNSAAPGASTNATSSASASASSTSTSASPGSTTSPAST) shows a compositional bias: low complexity. The FCS-type zinc-finger motif lies at 54–93 (RGRPAKRATCTWCGEGKLPLQYVLPTQTGKKEFCSETCIA). Zn(2+)-binding residues include cysteine 63, cysteine 66, cysteine 87, and cysteine 91. MBT repeat units lie at residues 175 to 273 (FDWD…LQPP) and 281 to 382 (SSWP…MQPP). Disordered regions lie at residues 535-621 (NSRK…SNKV), 652-692 (TNTN…GGSA), and 713-735 (ANVK…ASLP). Phosphothreonine is present on threonine 546. 2 positions are modified to phosphoserine: serine 549 and serine 550. The segment covering 560–569 (QSNSATTSPS) has biased composition (polar residues). At serine 585 the chain carries Phosphoserine. The segment covering 598–620 (ASQQNSNHSLNNNNNSASKSSNK) has biased composition (low complexity). Low complexity predominate over residues 724-735 (SPTTLSSSASLP). The 71-residue stretch at 806–876 (WTIEEVIQYI…KVNGRRNNLA (71 aa)) folds into the SAM domain.

The protein belongs to the SCM family. As to quaternary structure, scm associates with the PRC1 core complex containing PSC, PC, PH and Sce/RING1. Forms homotypic and heterotypic interactions. Interacts with the SAM domain of ph-p via its SAM domain in vitro. Interacts with corto in vitro.

Its subcellular location is the nucleus. Polycomb group (PcG) protein. PcG proteins act by forming multiprotein complexes, which are required to maintain the transcriptionally repressive state of homeotic genes throughout development. PcG proteins are not required to initiate repression, but to maintain it during later stages of development. They probably act via the methylation of histones, rendering chromatin heritably changed in its expressibility. This is Polycomb protein Scm from Drosophila melanogaster (Fruit fly).